The sequence spans 1046 residues: UDP-N-acetylglucosamine--peptide N-acetylglucosaminyltransferase 110 kDa subunit (1046 aa).

N-acetylalanine is present on alanine 2. Serine 3 and serine 4 each carry phosphoserine; by GSK3-beta; alternate. O-linked (GlcNAc) serine; alternate glycans are attached at residues serine 3 and serine 4. Serine 20 is modified (phosphoserine). 12 TPR repeats span residues 21–54 (FQGL…EPDN), 89–122 (AEAY…KPDF), 123–156 (IDGY…NPDL), 157–190 (YCVR…QPNF), 191–224 (AVAW…DPNF), 225–258 (LDAY…SPNH), 259–292 (AVVH…QPHF), 293–326 (PDAY…CPTH), 327–360 (ADSL…FPEF), 361–394 (AAAH…SPTF), 395–428 (ADAY…NPAF), and 429–462 (ADAH…KPDF). An O-linked (GlcNAc) serine; by autocatalysis glycan is attached at serine 399. A Phosphothreonine modification is found at threonine 454. Residues 463-473 (PDAYCNLAHCL) form a TPR 13; truncated repeat. The DFP motif signature appears at 464 to 466 (DAY). The short motif at 487 to 503 (KKLVSIVADQLEKNRLP) is the Nuclear localization signal element. Histidine 508 functions as the Proton acceptor in the catalytic mechanism. Residues glutamine 849, lysine 852, 906-908 (APK), 911-914 (HVRR), 930-932 (HTT), and aspartate 935 each bind UDP. Position 989 is a phosphotyrosine (tyrosine 989). The required for phosphatidylinositol 3,4,5-triphosphate binding stretch occupies residues 991-1010 (KKIRGKVWKQRISSPLFNTK).

This sequence belongs to the glycosyltransferase 41 family. O-GlcNAc transferase subfamily. Monomer; may exist in different oligomerization states in cells. Homotrimer, oligomerizes via TPR repeats 6 and 7. Trimerization is not necessary for activity in vitro, however it increases affinity for UDP-GlcNAc. Component of a THAP1/THAP3-HCFC1-OGT complex. Component of the NSL complex at least composed of MOF/KAT8, KANSL1, KANSL2, KANSL3, MCRS1, PHF20, OGT1/OGT, WDR5 and HCFC1. Found in a complex with KIF5B, RHOT1, RHOT2 and TRAK1. Found in a complex composed of at least SINHCAF, SIN3A, HDAC1, SAP30, RBBP4, OGT and TET1. Component of a complex composed of KMT2E/MLL5, OGT and USP7; the complex stabilizes KMT2E/MLL5, preventing KMT2E/MLL5 ubiquitination and proteasomal-mediated degradation. Interacts (via TPRs 1-6) with SIN3A; the interaction mediates transcriptional repression in parallel with histone deacetylase. Interacts (via TPR 5-6) with TET1, TET2 and TET3. Interacts (via TPR repeats 6 and 7) with ATXN10. Interacts with NSD2. Interacts with PROSER1; this interaction mediates TET2 O-GlcNAcylation and stability by promoting the interaction between OGT and TET2. In terms of processing, ubiquitinated by the SCF(FBXO31) complex, leading to its proteasomal degradation. Post-translationally, phosphorylation on Ser-3 or Ser-4 by GSK3-beta positively regulates its activity. Phosphorylation at Thr-454 by AMPK promotes nuclear localization. Glycosylated via autocatalysis; O-GlcNAcylation at Ser-399 promotes nuclear localization.

It is found in the nucleus. Its subcellular location is the cytoplasm. It catalyses the reaction L-seryl-[protein] + UDP-N-acetyl-alpha-D-glucosamine = 3-O-(N-acetyl-beta-D-glucosaminyl)-L-seryl-[protein] + UDP + H(+). The enzyme catalyses L-threonyl-[protein] + UDP-N-acetyl-alpha-D-glucosamine = 3-O-(N-acetyl-beta-D-glucosaminyl)-L-threonyl-[protein] + UDP + H(+). It participates in protein modification; protein glycosylation. Subject to product inhibition by UDP. Catalyzes the transfer of a single N-acetylglucosamine from UDP-GlcNAc to a serine or threonine residue in cytoplasmic and nuclear proteins resulting in their modification with a beta-linked N-acetylglucosamine (O-GlcNAc). Glycosylates a large and diverse number of proteins including histone H2B, AKT1, AMPK, ATG4B, CAPRIN1, EZH2, FNIP1, GSDMD, KRT7, LMNA, LMNB1, LMNB2, RPTOR, HOXA1, PFKL, KMT2E/MLL5, MAPT/TAU, TET2, RBL2, RET, NOD2 and HCFC1. Can regulate their cellular processes via cross-talk between glycosylation and phosphorylation or by affecting proteolytic processing. Involved in insulin resistance in muscle and adipocyte cells via glycosylating insulin signaling components and inhibiting the 'Thr-308' phosphorylation of AKT1, enhancing IRS1 phosphorylation and attenuating insulin signaling. Involved in glycolysis regulation by mediating glycosylation of 6-phosphofructokinase PFKL, inhibiting its activity. Plays a key role in chromatin structure by mediating O-GlcNAcylation of 'Ser-112' of histone H2B: recruited to CpG-rich transcription start sites of active genes via its interaction with TET proteins (TET1, TET2 or TET3). As part of the NSL complex indirectly involved in acetylation of nucleosomal histone H4 on several lysine residues. O-GlcNAcylation of 'Ser-75' of EZH2 increases its stability, and facilitating the formation of H3K27me3 by the PRC2/EED-EZH2 complex. Stabilizes KMT2E/MLL5 by mediating its glycosylation, thereby preventing KMT2E/MLL5 ubiquitination. Regulates circadian oscillation of the clock genes and glucose homeostasis in the liver. Stabilizes clock proteins BMAL1 and CLOCK through O-glycosylation, which prevents their ubiquitination and subsequent degradation. Promotes the CLOCK-BMAL1-mediated transcription of genes in the negative loop of the circadian clock such as PER1/2 and CRY1/2. O-glycosylates HCFC1 and regulates its proteolytic processing and transcriptional activity. Component of a THAP1/THAP3-HCFC1-OGT complex that is required for the regulation of the transcriptional activity of RRM1. Regulates mitochondrial motility in neurons by mediating glycosylation of TRAK1. Promotes autophagy by mediating O-glycosylation of ATG4B. Acts as a regulator of mTORC1 signaling by mediating O-glycosylation of RPTOR and FNIP1: O-GlcNAcylation of RPTOR in response to glucose sufficiency promotes activation of the mTORC1 complex. The sequence is that of UDP-N-acetylglucosamine--peptide N-acetylglucosaminyltransferase 110 kDa subunit (OGT) from Sus scrofa (Pig).